The sequence spans 574 residues: MEASLGIQMDEPMAFSPQRDRFQAEGSLKKNEQNFKLAGVKKDIEKLYEAVPQLSNVFKIEDKIGEGTFSSVYLATAQLQVGPEEKIALKHLIPTSHPIRIAAELQCLTVAGGQDNVMGVKYCFRKNDHVVIAMPYLEHESFLDILNSLSFQEVREYMLNLFKALKRIHQFGIVHRDVKPSNFLYNRRLKKYALVDFGLAQGTHDTKIELLKFVQSEAQQERCSQNKSHIITGNKIPLSGPVPKELDQQSTTKASVKRPYTNAQIQIKQGKDGKEGSVGLSVQRSVFGERNFNIHSSISHESPAVKLMKQSKTVDVLSRKLATKKKAISTKVMNSAVMRKTASSCPASLTCDCYATDKVCSICLSRRQQVAPRAGTPGFRAPEVLTKCPNQTTAIDMWSAGVIFLSLLSGRYPFYKASDDLTALAQIMTIRGSRETIQAAKTFGKSILCSKEVPAQDLRKLCERLRGMDSSTPKLTSDIQGHASHQPAISEKTDHKASCLVQTPPGQYSGNSFKKGDSNSCEHCFDEYNTNLEGWNEVPDEAYDLLDKLLDLNPASRITAEEALLHPFFKDMSL.

Phosphoserine is present on Ser27. Residues 58-574 (FKIEDKIGEG…LHPFFKDMSL (517 aa)) enclose the Protein kinase domain. ATP contacts are provided by residues 64 to 72 (IGEGTFSSV) and Lys90. Asp177 (proton acceptor) is an active-site residue. Lys268 is covalently cross-linked (Glycyl lysine isopeptide (Lys-Gly) (interchain with G-Cter in SUMO2)). Thr503 carries the phosphothreonine modification.

The protein belongs to the protein kinase superfamily. Ser/Thr protein kinase family. CDC7 subfamily. Forms a complex with either DBF4/DBF4A or DBF4B, leading to the activation of the kinase activity. Interacts with CLASPIN (via the acidic patch); the interaction is required for phosphorylation of MCM proteins and CLASPIN. Mg(2+) is required as a cofactor.

It is found in the nucleus. The enzyme catalyses L-seryl-[protein] + ATP = O-phospho-L-seryl-[protein] + ADP + H(+). It catalyses the reaction L-threonyl-[protein] + ATP = O-phospho-L-threonyl-[protein] + ADP + H(+). Kinase involved in initiation of DNA replication. Phosphorylates critical substrates that regulate the G1/S phase transition and initiation of DNA replication, such as MCM proteins and CLASPIN. This is Cell division cycle 7-related protein kinase from Homo sapiens (Human).